Here is a 901-residue protein sequence, read N- to C-terminus: Cyanophycin synthetase (901 aa).

The ATP-grasp domain maps to Lys-224–Phe-478. ATP is bound at residue Gly-493–Thr-499.

This sequence in the C-terminal section; belongs to the MurCDEF family. Homodimer.

It catalyses the reaction [L-4-(L-arginin-2-N-yl)aspartate](n) + L-aspartate + ATP = [L-4-(L-arginin-2-N-yl)aspartate](n)-L-aspartate + ADP + phosphate + H(+). The enzyme catalyses [L-4-(L-arginin-2-N-yl)aspartate](n)-L-aspartate + L-arginine + ATP = [L-4-(L-arginin-2-N-yl)aspartate](n+1) + ADP + phosphate + H(+). Its function is as follows. Catalyzes the ATP-dependent polymerization of arginine and aspartate to multi-L-arginyl-poly-L-aspartic acid (cyanophycin; a water-insoluble reserve polymer). This Trichormus variabilis (strain ATCC 29413 / PCC 7937) (Anabaena variabilis) protein is Cyanophycin synthetase (cphA).